Consider the following 319-residue polypeptide: Probable deoxyhypusine synthase (319 aa).

The Nucleophile role is filled by lysine 287.

The protein belongs to the deoxyhypusine synthase family. The cofactor is NAD(+).

It carries out the reaction [eIF5A protein]-L-lysine + spermidine = [eIF5A protein]-deoxyhypusine + propane-1,3-diamine. Its pathway is protein modification; eIF5A hypusination. Catalyzes the NAD-dependent oxidative cleavage of spermidine and the subsequent transfer of the butylamine moiety of spermidine to the epsilon-amino group of a specific lysine residue of the eIF-5A precursor protein to form the intermediate deoxyhypusine residue. The polypeptide is Probable deoxyhypusine synthase (Ignicoccus hospitalis (strain KIN4/I / DSM 18386 / JCM 14125)).